The chain runs to 1360 residues: MASDSPARSLDEIDLSALRDPAGIFELVELVGNGTYGQVYKGRHVKTGQLAAIKVMDVTGDEEEEIKQEINMLKKYSHHRNIATYYGAFIKKNPPGMDDQLWLVMEFCGAGSVTDLIKNTKGNTLKEEWIAYICREILRGLSHLHQHKVIHRDIKGQNVLLTENAEVKLVDFGVSAQLDRTVGRRNTFIGTPYWMAPEVIACDENPDATYDFKSDLWSLGITAIEMAEGAPPLCDMHPMRALFLIPRNPAPRLKSKKWSKKFQSFIESCLVKNHSQRPATEQLMKHPFIRDQPNERQVRIQLKDHIDRTKKKRGEKDETEYEYSGSEEEEEENDSGEPSSILNLPGESTLRRDFLRLQLANKERSEALRRQQLEQQQRENEEHKRQLLAERQKRIEEQKEQRRRLEEQQRREKELRKQQEREQRRHYEEQMRREEERRRAEHEQEYIRRQLEEEQRQLEILQQQLLHEQALLLEYKRKQLEEQRQAERLQRQLKQERDYLVSLQHQRQEQRPVEKKPLYHYKEGMSPSEKPAWAKEVEERSRLNRQSSPAMPHKVANRISDPNLPPRSESFSISGVQPARTPPMLRPVDPQIPHLVAVKSQGPALTASQSVHEQPTKGLSGFQEALNVTSHRVEMPRQNSDPTSENPPLPTRIEKFDRSSWLRQEEDIPPKVPQRTTSISPALARKNSPGNGSALGPRLGSQPIRASNPDLRRTEPILESPLQRTSSGSSSSSSTPSSQPSSQGGSQPGSQAGSSERTRVRANSKSEGSPVLPHEPAKVKPEESRDITRPSRPASYKKAIDEDLTALAKELRELRIEETNRPMKKVTDYSSSSEESESSEEEEEDGESETHDGTVAVSDIPRLIPTGAPGSNEQYNVGMVGTHGLETSHADSFSGSISREGTLMIRETSGEKKRSGHSDSNGFAGHINLPDLVQQSHSPAGTPTEGLGRVSTHSQEMDSGTEYGMGSSTKASFTPFVDPRVYQTSPTDEDEEDEESSAAALFTSELLRQEQAKLNEARKISVVNVNPTNIRPHSDTPEIRKYKKRFNSEILCAALWGVNLLVGTENGLMLLDRSGQGKVYNLINRRRFQQMDVLEGLNVLVTISGKKNKLRVYYLSWLRNRILHNDPEVEKKQGWITVGDLEGCIHYKVVKYERIKFLVIALKNAVEIYAWAPKPYHKFMAFKSFADLQHKPLLVDLTVEEGQRLKVIFGSHTGFHVIDVDSGNSYDIYIPSHIQGNITPHAIVILPKTDGMEMLVCYEDEGVYVNTYGRITKDVVLQWGEMPTSVAYIHSNQIMGWGEKAIEIRSVETGHLDGVFMHKRAQRLKFLCERNDKVFFASVRSGGSSQVFFMTLNRNSMMNW.

The region spanning 25-289 (FELVELVGNG…TEQLMKHPFI (265 aa)) is the Protein kinase domain. ATP-binding positions include 31–39 (VGNGTYGQV) and Lys54. Residue Asp153 is the Proton acceptor of the active site. A Phosphothreonine modification is found at Thr187. Disordered stretches follow at residues 284 to 347 (MKHP…LPGE), 398 to 440 (QKEQ…RRRA), and 539 to 589 (ERSR…RPVD). A compositionally biased stretch (basic and acidic residues) spans 288 to 307 (FIRDQPNERQVRIQLKDHID). Positions 290-1047 (RDQPNERQVR…EIRKYKKRFN (758 aa)) are mediates interaction with NEDD4. Positions 317–335 (DETEYEYSGSEEEEEENDS) are enriched in acidic residues. Ser324 and Ser326 each carry phosphoserine. Residues Ser560 and Ser570 each carry the phosphoserine modification. Residue Thr581 is modified to Phosphothreonine. A phosphoserine mark is found at Ser600, Ser608, Ser610, and Ser640. 4 disordered regions span residues 601–801 (QGPA…KAID), 814–878 (LRIE…YNVG), 908–927 (TSGE…AGHI), and 933–998 (VQQS…ESSA). Residues 652-669 (RIEKFDRSSWLRQEEDIP) are compositionally biased toward basic and acidic residues. A phosphoserine mark is found at Ser678, Ser680, Ser688, Ser701, Ser707, Ser720, Ser764, Ser766, and Ser769. Over residues 720 to 755 (SPLQRTSSGSSSSSSTPSSQPSSQGGSQPGSQAGSS) the composition is skewed to low complexity. 2 stretches are compositionally biased toward basic and acidic residues: residues 775–789 (EPAK…DITR) and 814–827 (LRIE…KKVT). Acidic residues predominate over residues 834 to 847 (EESESSEEEEEDGE). The span at 908–917 (TSGEKKRSGH) shows a compositional bias: basic and acidic residues. A Phosphoserine modification is found at Ser959. Acidic residues predominate over residues 987-996 (TDEDEEDEES). One can recognise a CNH domain in the interval 1047-1334 (NSEILCAALW…KFLCERNDKV (288 aa)).

It belongs to the protein kinase superfamily. STE Ser/Thr protein kinase family. STE20 subfamily. As to quaternary structure, interacts (via the CNH domain) with RAP2A (GTP-bound form preferentially); the interaction is direct and required for the activation of TNIK by RAP2A. Interacts with NEDD4; recruits RAP2A to NEDD4. Interacts with TRAF2 and NCK. Interacts with TCF7L2/TCF4 and CTNNB1; the interaction is direct. Interacts with TANC1. Autophosphorylated. Autophosphorylation is activated by RAP2A and induces association to the cytoskeletal fraction. Expressed ubiquitously. Highest levels observed in heart, brain and skeletal muscle. Expressed in normal colonic epithelia and colorectal cancer tissues.

Its subcellular location is the nucleus. It is found in the cytoplasm. The protein localises to the recycling endosome. It localises to the cytoskeleton. It carries out the reaction L-seryl-[protein] + ATP = O-phospho-L-seryl-[protein] + ADP + H(+). The enzyme catalyses L-threonyl-[protein] + ATP = O-phospho-L-threonyl-[protein] + ADP + H(+). Its function is as follows. Serine/threonine kinase that acts as an essential activator of the Wnt signaling pathway. Recruited to promoters of Wnt target genes and required to activate their expression. May act by phosphorylating TCF4/TCF7L2. Appears to act upstream of the JUN N-terminal pathway. May play a role in the response to environmental stress. Part of a signaling complex composed of NEDD4, RAP2A and TNIK which regulates neuronal dendrite extension and arborization during development. More generally, it may play a role in cytoskeletal rearrangements and regulate cell spreading. Phosphorylates SMAD1 on Thr-322. Activator of the Hippo signaling pathway which plays a pivotal role in organ size control and tumor suppression by restricting proliferation and promoting apoptosis. MAP4Ks act in parallel to and are partially redundant with STK3/MST2 and STK4/MST2 in the phosphorylation and activation of LATS1/2, and establish MAP4Ks as components of the expanded Hippo pathway. The sequence is that of TRAF2 and NCK-interacting protein kinase from Homo sapiens (Human).